A 908-amino-acid polypeptide reads, in one-letter code: Oxysterol-binding protein 2 (908 aa).

A disordered region spans residues 42–112 (SAFGSGPASK…GLWPGSENGT (71 aa)). A compositionally biased stretch (polar residues) spans 81 to 90 (EPGSQTTSVP). The PH domain occupies 179 to 271 (LDSYKGWLLK…WITALELAKA (93 aa)). Disordered regions lie at residues 279 to 299 (TQSD…DNSE), 413 to 445 (RAFC…SEED), and 822 to 843 (LMER…EKQR). S284 is modified (phosphoserine). The span at 424–437 (SSSKSFSEGSFLTS) shows a compositional bias: low complexity.

It belongs to the OSBP family. Interacts with CCDC159. As to expression, expressed in the testis (at protein level). Expressed in postmeiotic germ cells of the testis.

It localises to the membrane. The protein resides in the cytoplasmic vesicle. It is found in the secretory vesicle. Its subcellular location is the acrosome. Functionally, binds 7-ketocholesterol. Acts during spermatid development where its function is required prior to the removal of cytoplasm from the sperm head. The chain is Oxysterol-binding protein 2 (Osbp2) from Mus musculus (Mouse).